Consider the following 262-residue polypeptide: tRNA pseudouridine synthase A 2 (262 aa).

The active-site Nucleophile is D66. Residue Y125 participates in substrate binding.

Belongs to the tRNA pseudouridine synthase TruA family. In terms of assembly, homodimer.

The catalysed reaction is uridine(38/39/40) in tRNA = pseudouridine(38/39/40) in tRNA. Formation of pseudouridine at positions 38, 39 and 40 in the anticodon stem and loop of transfer RNAs. This chain is tRNA pseudouridine synthase A 2, found in Protochlamydia amoebophila (strain UWE25).